The primary structure comprises 287 residues: ATP synthase gamma chain (287 aa).

This sequence belongs to the ATPase gamma chain family. As to quaternary structure, F-type ATPases have 2 components, CF(1) - the catalytic core - and CF(0) - the membrane proton channel. CF(1) has five subunits: alpha(3), beta(3), gamma(1), delta(1), epsilon(1). CF(0) has three main subunits: a, b and c.

It is found in the cell inner membrane. In terms of biological role, produces ATP from ADP in the presence of a proton gradient across the membrane. The gamma chain is believed to be important in regulating ATPase activity and the flow of protons through the CF(0) complex. The sequence is that of ATP synthase gamma chain from Azotobacter vinelandii (strain DJ / ATCC BAA-1303).